Here is a 94-residue protein sequence, read N- to C-terminus: Integration host factor subunit beta (94 aa).

It belongs to the bacterial histone-like protein family. Heterodimer of an alpha and a beta chain.

Functionally, this protein is one of the two subunits of integration host factor, a specific DNA-binding protein that functions in genetic recombination as well as in transcriptional and translational control. The polypeptide is Integration host factor subunit beta (Aeromonas hydrophila subsp. hydrophila (strain ATCC 7966 / DSM 30187 / BCRC 13018 / CCUG 14551 / JCM 1027 / KCTC 2358 / NCIMB 9240 / NCTC 8049)).